A 375-amino-acid chain; its full sequence is DNA replication and repair protein RecF (375 aa).

An ATP-binding site is contributed by 30–37 (GDNAQGKT).

This sequence belongs to the RecF family.

Its subcellular location is the cytoplasm. The RecF protein is involved in DNA metabolism; it is required for DNA replication and normal SOS inducibility. RecF binds preferentially to single-stranded, linear DNA. It also seems to bind ATP. The sequence is that of DNA replication and repair protein RecF from Symbiobacterium thermophilum (strain DSM 24528 / JCM 14929 / IAM 14863 / T).